Reading from the N-terminus, the 151-residue chain is Ribosomal RNA large subunit methyltransferase H (151 aa).

S-adenosyl-L-methionine-binding positions include Gly-100 and 119-124; that span reads LSKMTF.

It belongs to the RNA methyltransferase RlmH family. Homodimer.

The protein localises to the cytoplasm. It carries out the reaction pseudouridine(1915) in 23S rRNA + S-adenosyl-L-methionine = N(3)-methylpseudouridine(1915) in 23S rRNA + S-adenosyl-L-homocysteine + H(+). Specifically methylates the pseudouridine at position 1915 (m3Psi1915) in 23S rRNA. This Thermotoga maritima (strain ATCC 43589 / DSM 3109 / JCM 10099 / NBRC 100826 / MSB8) protein is Ribosomal RNA large subunit methyltransferase H.